A 307-amino-acid polypeptide reads, in one-letter code: Glycine--tRNA ligase alpha subunit (307 aa).

The protein belongs to the class-II aminoacyl-tRNA synthetase family. As to quaternary structure, tetramer of two alpha and two beta subunits.

It localises to the cytoplasm. The catalysed reaction is tRNA(Gly) + glycine + ATP = glycyl-tRNA(Gly) + AMP + diphosphate. This is Glycine--tRNA ligase alpha subunit from Xylella fastidiosa (strain M23).